A 221-amino-acid chain; its full sequence is Adenylate kinase (221 aa).

10–15 (GAGKGT) contacts ATP. Residues 30–59 (STGDMLRAAVKAGTPLGLEAKRYMDAGELV) are NMP. AMP-binding positions include threonine 31, arginine 36, 57 to 59 (ELV), 85 to 88 (GFPR), and glutamine 92. The interval 122–159 (GRRMHPASGRTYHVKFNPPKVEGVDDVTGEPLIQRDDD) is LID. ATP is bound by residues arginine 123 and 132–133 (TY). Residues arginine 156 and arginine 167 each contribute to the AMP site. Glycine 207 is a binding site for ATP.

It belongs to the adenylate kinase family. Monomer.

The protein localises to the cytoplasm. The catalysed reaction is AMP + ATP = 2 ADP. It participates in purine metabolism; AMP biosynthesis via salvage pathway; AMP from ADP: step 1/1. Catalyzes the reversible transfer of the terminal phosphate group between ATP and AMP. Plays an important role in cellular energy homeostasis and in adenine nucleotide metabolism. The polypeptide is Adenylate kinase (Paraburkholderia phymatum (strain DSM 17167 / CIP 108236 / LMG 21445 / STM815) (Burkholderia phymatum)).